The chain runs to 833 residues: Homeobox-leucine zipper protein ATHB-8 (833 aa).

The homeobox DNA-binding region spans 12-75; it reads DNGKYVRYTP…NRRCREKQRK (64 aa). Residues 70 to 108 are a coiled coil; sequence REKQRKEASRLQAVNRKLTAMNKLLMEENDRLQKQVSHL. The region spanning 150–378 is the START domain; the sequence is RDASPAGLLS…ISQEISQPNV (229 aa).

This sequence belongs to the HD-ZIP homeobox family. Class III subfamily. Interacts with ESR1 and ESR2. Interacts with ZPR3.

The protein resides in the nucleus. Probable transcription factor involved in the regulation of vascular development. May promote differentiation of precambial and cambial cells. The polypeptide is Homeobox-leucine zipper protein ATHB-8 (ATHB-8) (Arabidopsis thaliana (Mouse-ear cress)).